A 106-amino-acid chain; its full sequence is Large ribosomal subunit protein uL24 (106 aa).

The protein belongs to the universal ribosomal protein uL24 family. Part of the 50S ribosomal subunit.

In terms of biological role, one of two assembly initiator proteins, it binds directly to the 5'-end of the 23S rRNA, where it nucleates assembly of the 50S subunit. Functionally, one of the proteins that surrounds the polypeptide exit tunnel on the outside of the subunit. The polypeptide is Large ribosomal subunit protein uL24 (Blochmanniella floridana).